The sequence spans 276 residues: 4-deoxy-L-threo-5-hexosulose-uronate ketol-isomerase (276 aa).

The Zn(2+) site is built by His194, His196, Glu201, and His243.

Belongs to the KduI family. It depends on Zn(2+) as a cofactor.

It carries out the reaction 5-dehydro-4-deoxy-D-glucuronate = 3-deoxy-D-glycero-2,5-hexodiulosonate. It functions in the pathway glycan metabolism; pectin degradation; 2-dehydro-3-deoxy-D-gluconate from pectin: step 4/5. Catalyzes the isomerization of 5-dehydro-4-deoxy-D-glucuronate to 3-deoxy-D-glycero-2,5-hexodiulosonate. This Shouchella clausii (strain KSM-K16) (Alkalihalobacillus clausii) protein is 4-deoxy-L-threo-5-hexosulose-uronate ketol-isomerase.